The following is a 400-amino-acid chain: Serine/threonine transporter SstT (400 aa).

Transmembrane regions (helical) follow at residues 14–34, 48–68, 76–96, 136–156, 177–197, 211–231, 285–305, 311–331, and 349–371; these read IIIA…VTPY, SVAP…FQVG, VLLL…IASL, AISE…GLAM, IIHK…AVTF, LLAV…PILV, IPLG…VLTL, LGIH…TISA, and CSLF…IISV.

It belongs to the dicarboxylate/amino acid:cation symporter (DAACS) (TC 2.A.23) family.

The protein localises to the cell inner membrane. It catalyses the reaction L-serine(in) + Na(+)(in) = L-serine(out) + Na(+)(out). The enzyme catalyses L-threonine(in) + Na(+)(in) = L-threonine(out) + Na(+)(out). Its function is as follows. Involved in the import of serine and threonine into the cell, with the concomitant import of sodium (symport system). The polypeptide is Serine/threonine transporter SstT (Acinetobacter baumannii (strain ATCC 17978 / DSM 105126 / CIP 53.77 / LMG 1025 / NCDC KC755 / 5377)).